The chain runs to 203 residues: E3 ubiquitin-protein ligase rnf152-B (203 aa).

The segment at 12 to 55 adopts an RING-type zinc-finger fold; it reads CQICFNYYSPRRRPKLLDCKHTCCSVCLQQMRASQKDLRCPWCR. Residues 167 to 187 form a helical membrane-spanning segment; that stretch reads SGVCTVILVACVLVFLLGIVL.

Belongs to the RNF152 family.

The protein resides in the lysosome membrane. It carries out the reaction S-ubiquitinyl-[E2 ubiquitin-conjugating enzyme]-L-cysteine + [acceptor protein]-L-lysine = [E2 ubiquitin-conjugating enzyme]-L-cysteine + N(6)-ubiquitinyl-[acceptor protein]-L-lysine.. It functions in the pathway protein modification; protein ubiquitination. Functionally, E3 ubiquitin-protein ligase that acts as a negative regulator of mTORC1 signaling by mediating ubiquitination of RagA/RRAGA and RHEB. Catalyzes 'Lys-63'-linked polyubiquitination of RagA/RRAGA in response to amino acid starvation, thereby regulating mTORC1 signaling. Also mediates monoubiquitination of RHEB, promoting its association with the TSC-TBC complex and subsequent inhibition. Also mediates 'Lys-48'-linked polyubiquitination of target proteins and their subsequent targeting to the proteasome for degradation. The polypeptide is E3 ubiquitin-protein ligase rnf152-B (Xenopus laevis (African clawed frog)).